Reading from the N-terminus, the 381-residue chain is Alcohol dehydrogenase class-3 (381 aa).

Position 49 (C49) interacts with Zn(2+). H50 contributes to the NAD(+) binding site. An alcohol contacts are provided by T51 and H71. The Zn(2+) site is built by H71, E72, C101, C104, C107, C115, and C179. Residues 204–209 (GLGTVG), D228, K233, I274, 297–299 (VGV), 322–324 (TAF), and R374 contribute to the NAD(+) site.

Belongs to the zinc-containing alcohol dehydrogenase family. Class-III subfamily. Homodimer. It depends on Zn(2+) as a cofactor.

Its subcellular location is the cytoplasm. The enzyme catalyses a primary alcohol + NAD(+) = an aldehyde + NADH + H(+). The catalysed reaction is a secondary alcohol + NAD(+) = a ketone + NADH + H(+). It carries out the reaction S-(hydroxymethyl)glutathione + NADP(+) = S-formylglutathione + NADPH + H(+). It catalyses the reaction S-(hydroxymethyl)glutathione + NAD(+) = S-formylglutathione + NADH + H(+). The protein is Alcohol dehydrogenase class-3 of Oryza sativa subsp. japonica (Rice).